We begin with the raw amino-acid sequence, 398 residues long: Phytoene synthase 2, chloroplastic (398 aa).

Residues 1–80 (MASSSSAAAL…EEAVYEVVLR (80 aa)) constitute a chloroplast transit peptide.

It belongs to the phytoene/squalene synthase family. Expressed in leaves and endosperm. Expressed in developing leaves.

The protein localises to the plastid. It is found in the chloroplast membrane. The protein resides in the chloroplast. It localises to the plastoglobule. The enzyme catalyses 2 (2E,6E,10E)-geranylgeranyl diphosphate = 15-cis-phytoene + 2 diphosphate. Catalyzes the conversion of geranylgeranyl diphosphate to phytoene. Mediates the first committed step in carotenoid biosynthesis. The protein is Phytoene synthase 2, chloroplastic of Oryza sativa subsp. japonica (Rice).